The primary structure comprises 1411 residues: DNA-directed RNA polymerase subunit beta' (1411 aa).

4 residues coordinate Zn(2+): C70, C72, C85, and C88. Residues D458, D460, and D462 each coordinate Mg(2+). Zn(2+) is bound by residues C813, C887, C894, and C897. Positions 1391 to 1411 (AQAEVPELDGSSVTASDAAAD) are disordered.

This sequence belongs to the RNA polymerase beta' chain family. In terms of assembly, the RNAP catalytic core consists of 2 alpha, 1 beta, 1 beta' and 1 omega subunit. When a sigma factor is associated with the core the holoenzyme is formed, which can initiate transcription. It depends on Mg(2+) as a cofactor. Zn(2+) serves as cofactor.

It catalyses the reaction RNA(n) + a ribonucleoside 5'-triphosphate = RNA(n+1) + diphosphate. DNA-dependent RNA polymerase catalyzes the transcription of DNA into RNA using the four ribonucleoside triphosphates as substrates. The polypeptide is DNA-directed RNA polymerase subunit beta' (Verminephrobacter eiseniae (strain EF01-2)).